Consider the following 104-residue polypeptide: Large ribosomal subunit protein uL24 (104 aa).

The protein belongs to the universal ribosomal protein uL24 family. In terms of assembly, part of the 50S ribosomal subunit.

One of two assembly initiator proteins, it binds directly to the 5'-end of the 23S rRNA, where it nucleates assembly of the 50S subunit. Its function is as follows. One of the proteins that surrounds the polypeptide exit tunnel on the outside of the subunit. The sequence is that of Large ribosomal subunit protein uL24 from Ectopseudomonas mendocina (strain ymp) (Pseudomonas mendocina).